The chain runs to 330 residues: NADH-quinone oxidoreductase subunit H (330 aa).

Helical transmembrane passes span 11 to 31 (ILVAVLKAIVILLAVVVCGAL), 81 to 101 (FIFVLAPMIAFAAMLMAFAII), 114 to 134 (IGILFFFAMAGLSVYAVLFAG), 154 to 174 (ISYEVFLALALMGVVAQVGSF), 187 to 207 (LWFIIPQFFGFCTFFIAGVAV), 238 to 258 (FFVGEYVGIVTISALLVTLFF), 270 to 290 (QIPFFWFALKTAFFIMIFILL), and 309 to 329 (FCLPLTLINLLVTGALVLAAA).

This sequence belongs to the complex I subunit 1 family. As to quaternary structure, NDH-1 is composed of 13 different subunits. Subunits NuoA, H, J, K, L, M, N constitute the membrane sector of the complex.

Its subcellular location is the cell inner membrane. It catalyses the reaction a quinone + NADH + 5 H(+)(in) = a quinol + NAD(+) + 4 H(+)(out). Its function is as follows. NDH-1 shuttles electrons from NADH, via FMN and iron-sulfur (Fe-S) centers, to quinones in the respiratory chain. The immediate electron acceptor for the enzyme in this species is believed to be ubiquinone. Couples the redox reaction to proton translocation (for every two electrons transferred, four hydrogen ions are translocated across the cytoplasmic membrane), and thus conserves the redox energy in a proton gradient. This subunit may bind ubiquinone. This Ectopseudomonas mendocina (strain ymp) (Pseudomonas mendocina) protein is NADH-quinone oxidoreductase subunit H.